The sequence spans 483 residues: MNKKIRVRYAPSPTGLLHIGNARTALFNYLFARHHGGDFIIRIEDTDRERHVEDGERSQLENLRWLGMDWDESPETHENYRQSERLPLYQKYIDQLLAEGKAYYSYKTPEELEADHAKQEAAGIPPHYINEYAGMSDDEKAAYIAERKAQNIEPVVRISVDEKAIYKWNDIVKGEIEFEGGNIGGDWVIQKRDGYPTYNFAVVVDDHDMQISHVIRGDDHIANTPKQLVVYDALGWEAPQFGHMTLIINSETGKKLSKRDTNTLQFIEDYRKKGYMSDAIFNFIALLGWNPGGEKEIFSREELIELFDENRLSKSPAAFDQKKLDWMDNEYIKNADFAKVFELTKPFLLAANRFDERAQELVKLYQPQMKSADEVVELTDLFYGDFPELTDEAREMLAAETTPLALSTFRAKLAELPESDFTVENIFPLFKATQKETGVKGKMLWMPIRIAASGSMHGPELPETIALLGKEKVLAHLDAALNK.

A 'HIGH' region motif is present at residues 11 to 21 (PSPTGLLHIGN). Positions 255 to 259 (KLSKR) match the 'KMSKS' region motif. Residue K258 coordinates ATP.

It belongs to the class-I aminoacyl-tRNA synthetase family. Glutamate--tRNA ligase type 1 subfamily. Monomer.

The protein localises to the cytoplasm. It catalyses the reaction tRNA(Glu) + L-glutamate + ATP = L-glutamyl-tRNA(Glu) + AMP + diphosphate. In terms of biological role, catalyzes the attachment of glutamate to tRNA(Glu) in a two-step reaction: glutamate is first activated by ATP to form Glu-AMP and then transferred to the acceptor end of tRNA(Glu). This is Glutamate--tRNA ligase from Lactococcus lactis subsp. cremoris (strain SK11).